The chain runs to 427 residues: Tol-Pal system protein TolB (427 aa).

A signal peptide spans 1-23; it reads MKLLKRLVSVFAIVLAVGSNAFA.

The protein belongs to the TolB family. In terms of assembly, the Tol-Pal system is composed of five core proteins: the inner membrane proteins TolA, TolQ and TolR, the periplasmic protein TolB and the outer membrane protein Pal. They form a network linking the inner and outer membranes and the peptidoglycan layer.

Its subcellular location is the periplasm. Its function is as follows. Part of the Tol-Pal system, which plays a role in outer membrane invagination during cell division and is important for maintaining outer membrane integrity. The polypeptide is Tol-Pal system protein TolB (Haemophilus influenzae (strain 86-028NP)).